A 430-amino-acid chain; its full sequence is Phosphoribosylamine--glycine ligase (430 aa).

One can recognise an ATP-grasp domain in the interval 109–314 (RGLMNKYGID…FLTIAEHIIN (206 aa)). 136–192 (IREYPGDLAVKPTGLTGGKGVKVMGEQVDREGAVEYAMTLKDQVIILEERLLGEEFT) lines the ATP pocket. Residues Q272, E284, and N286 each contribute to the Mg(2+) site. Mn(2+) contacts are provided by Q272, E284, and N286.

The protein belongs to the GARS family. It depends on Mg(2+) as a cofactor. Requires Mn(2+) as cofactor.

It carries out the reaction 5-phospho-beta-D-ribosylamine + glycine + ATP = N(1)-(5-phospho-beta-D-ribosyl)glycinamide + ADP + phosphate + H(+). It participates in purine metabolism; IMP biosynthesis via de novo pathway; N(1)-(5-phospho-D-ribosyl)glycinamide from 5-phospho-alpha-D-ribose 1-diphosphate: step 2/2. The sequence is that of Phosphoribosylamine--glycine ligase from Methanocorpusculum labreanum (strain ATCC 43576 / DSM 4855 / Z).